Reading from the N-terminus, the 180-residue chain is Oligoribonuclease (180 aa).

An Exonuclease domain is found at 7 to 170; sequence LIWIDLEMTG…DDIRESIAEL (164 aa). Tyrosine 128 is an active-site residue.

This sequence belongs to the oligoribonuclease family.

The protein localises to the cytoplasm. Its function is as follows. 3'-to-5' exoribonuclease specific for small oligoribonucleotides. The sequence is that of Oligoribonuclease from Pseudomonas aeruginosa (strain UCBPP-PA14).